The following is a 586-amino-acid chain: Transcription elongation regulator 1-like protein (586 aa).

The tract at residues Met1–Asp30 is disordered. The segment covering Phe7–Gln23 has biased composition (basic residues). Residues Thr148–Glu181 form the WW 1 domain. 2 disordered regions span residues Thr281 to Pro344 and Asp378 to Leu448. Over residues Lys306 to Pro317 the composition is skewed to basic and acidic residues. Residues Pro339–Asp372 form the WW 2 domain. Composition is skewed to basic and acidic residues over residues Asp378–Pro387, Asp411–Thr421, and Lys428–Thr439. FF domains follow at residues Leu450–Thr503 and Lys515–Ile570.

The polypeptide is Transcription elongation regulator 1-like protein (TCERG1L) (Homo sapiens (Human)).